The following is a 350-amino-acid chain: uncharacterized protein (350 aa).

Mn(2+) contacts are provided by D214, D225, H289, E318, and E332.

It belongs to the peptidase M24B family. The cofactor is Mn(2+).

This is an uncharacterized protein from Staphylococcus saprophyticus subsp. saprophyticus (strain ATCC 15305 / DSM 20229 / NCIMB 8711 / NCTC 7292 / S-41).